The primary structure comprises 370 residues: Probable pectin lyase E (370 aa).

Residues C75 and C96 are joined by a disulfide bond. R245 is an active-site residue. N-linked (GlcNAc...) asparagine glycosylation is present at N307. C311 and C319 are disulfide-bonded.

The protein belongs to the polysaccharide lyase 1 family.

The protein localises to the secreted. The catalysed reaction is Eliminative cleavage of (1-&gt;4)-alpha-D-galacturonan methyl ester to give oligosaccharides with 4-deoxy-6-O-methyl-alpha-D-galact-4-enuronosyl groups at their non-reducing ends.. Functionally, pectinolytic enzymes consist of four classes of enzymes: pectin lyase, polygalacturonase, pectin methylesterase and rhamnogalacturonase. Among pectinolytic enzymes, pectin lyase is the most important in depolymerization of pectin, since it cleaves internal glycosidic bonds of highly methylated pectins. The chain is Probable pectin lyase E (pelE) from Aspergillus niger.